Consider the following 265-residue polypeptide: 4-hydroxy-tetrahydrodipicolinate reductase (265 aa).

Residues 7-12 (GASGRM) and D33 each bind NAD(+). R34 lines the NADP(+) pocket. Residues 96–98 (GTT) and 120–123 (AANM) contribute to the NAD(+) site. The Proton donor/acceptor role is filled by H153. Residue H154 participates in (S)-2,3,4,5-tetrahydrodipicolinate binding. The active-site Proton donor is the K157. 163–164 (GT) contacts (S)-2,3,4,5-tetrahydrodipicolinate.

The protein belongs to the DapB family.

It localises to the cytoplasm. The catalysed reaction is (S)-2,3,4,5-tetrahydrodipicolinate + NAD(+) + H2O = (2S,4S)-4-hydroxy-2,3,4,5-tetrahydrodipicolinate + NADH + H(+). It carries out the reaction (S)-2,3,4,5-tetrahydrodipicolinate + NADP(+) + H2O = (2S,4S)-4-hydroxy-2,3,4,5-tetrahydrodipicolinate + NADPH + H(+). It participates in amino-acid biosynthesis; L-lysine biosynthesis via DAP pathway; (S)-tetrahydrodipicolinate from L-aspartate: step 4/4. Functionally, catalyzes the conversion of 4-hydroxy-tetrahydrodipicolinate (HTPA) to tetrahydrodipicolinate. The chain is 4-hydroxy-tetrahydrodipicolinate reductase from Burkholderia multivorans (strain ATCC 17616 / 249).